The following is a 168-amino-acid chain: Aphid transmission protein (168 aa).

Belongs to the caulimoviridae ORF II family.

This protein is involved in virus transmission. This Carnation etched ring virus (CERV) protein is Aphid transmission protein.